The sequence spans 288 residues: Oxaloacetate decarboxylase (288 aa).

Ser-47 contributes to the substrate binding site. Asp-85 lines the Mg(2+) pocket. Substrate contacts are provided by Arg-156 and His-232.

This sequence belongs to the isocitrate lyase/PEP mutase superfamily. Oxaloacetate decarboxylase family. In terms of assembly, homotetramer; dimer of dimers. Mg(2+) serves as cofactor.

The enzyme catalyses oxaloacetate + H(+) = pyruvate + CO2. In terms of biological role, catalyzes the decarboxylation of oxaloacetate into pyruvate. Seems to play a role in maintaining cellular concentrations of bicarbonate and pyruvate. In Bradyrhizobium sp. (strain ORS 278), this protein is Oxaloacetate decarboxylase.